A 320-amino-acid chain; its full sequence is Aspartate carbamoyltransferase catalytic subunit (320 aa).

Residues Arg-53 and Thr-54 each contribute to the carbamoyl phosphate site. Lys-82 provides a ligand contact to L-aspartate. Residues Arg-103, His-131, and Gln-134 each contribute to the carbamoyl phosphate site. L-aspartate contacts are provided by Arg-164 and Arg-227. Residues Leu-266 and Pro-267 each coordinate carbamoyl phosphate.

Belongs to the aspartate/ornithine carbamoyltransferase superfamily. ATCase family. In terms of assembly, heterododecamer (2C3:3R2) of six catalytic PyrB chains organized as two trimers (C3), and six regulatory PyrI chains organized as three dimers (R2).

The enzyme catalyses carbamoyl phosphate + L-aspartate = N-carbamoyl-L-aspartate + phosphate + H(+). It functions in the pathway pyrimidine metabolism; UMP biosynthesis via de novo pathway; (S)-dihydroorotate from bicarbonate: step 2/3. In terms of biological role, catalyzes the condensation of carbamoyl phosphate and aspartate to form carbamoyl aspartate and inorganic phosphate, the committed step in the de novo pyrimidine nucleotide biosynthesis pathway. This Bifidobacterium longum (strain NCC 2705) protein is Aspartate carbamoyltransferase catalytic subunit.